The following is a 155-amino-acid chain: Cytochrome c-550 (155 aa).

A signal peptide spans 1 to 20 (MKISIYATLAAITLALPAAA). Gln-21 is modified (pyrrolidone carboxylic acid). Residues Cys-35, Cys-38, His-39, and Met-120 each coordinate heme c. A propeptide spanning residues 150–155 (AEGESN) is cleaved from the precursor.

Post-translationally, binds 1 heme c group covalently per subunit.

This is Cytochrome c-550 (cycA) from Paracoccus denitrificans.